The primary structure comprises 193 residues: Ancillary SecYEG translocon subunit (193 aa).

Topologically, residues 1–8 (MLNISKKN) are cytoplasmic. Residues 9-29 (IIFFILFFLIISLILFNWKYF) form a helical membrane-spanning segment. Residues 30–193 (SLVNKENLES…MKLNELKEQN (164 aa)) are Periplasmic-facing.

It belongs to the YfgM family. As to quaternary structure, interacts with the SecYEG translocon. Forms a complex with PpiD.

Its subcellular location is the cell inner membrane. Its function is as follows. May mediate protein transfer from the SecYEG translocon to the periplasmic chaperone network via its periplasmic C-terminal region. The polypeptide is Ancillary SecYEG translocon subunit (Buchnera aphidicola subsp. Acyrthosiphon pisum (strain APS) (Acyrthosiphon pisum symbiotic bacterium)).